The sequence spans 277 residues: Diaminopimelate epimerase (277 aa).

Positions 13, 46, and 66 each coordinate substrate. Cysteine 75 (proton donor) is an active-site residue. Substrate is bound by residues 76 to 77 (GN), asparagine 159, asparagine 192, and 210 to 211 (ER). Catalysis depends on cysteine 219, which acts as the Proton acceptor. 220-221 (GT) is a substrate binding site.

Belongs to the diaminopimelate epimerase family. In terms of assembly, homodimer.

It localises to the cytoplasm. It catalyses the reaction (2S,6S)-2,6-diaminopimelate = meso-2,6-diaminopimelate. Its pathway is amino-acid biosynthesis; L-lysine biosynthesis via DAP pathway; DL-2,6-diaminopimelate from LL-2,6-diaminopimelate: step 1/1. Its function is as follows. Catalyzes the stereoinversion of LL-2,6-diaminopimelate (L,L-DAP) to meso-diaminopimelate (meso-DAP), a precursor of L-lysine and an essential component of the bacterial peptidoglycan. This chain is Diaminopimelate epimerase, found in Aromatoleum aromaticum (strain DSM 19018 / LMG 30748 / EbN1) (Azoarcus sp. (strain EbN1)).